Consider the following 186-residue polypeptide: Ras-related protein rapA (186 aa).

12-19 (GSGGVGKS) lines the GTP pocket. Positions 34–42 (YDPTIEDSY) match the Effector region motif. GTP contacts are provided by residues 59-63 (DTAGT) and 118-121 (NKCD). The residue at position 183 (Cys183) is a Cysteine methyl ester. Residue Cys183 is the site of S-geranylgeranyl cysteine attachment. A propeptide spans 184–186 (ALL) (removed in mature form).

This sequence belongs to the small GTPase superfamily. Ras family. In terms of assembly, interacts with ralGDS (only when rapA is in its GTP-bound state). Interacts with the Rap guanine nucleotide exchange factor glfB.

It is found in the cell membrane. The catalysed reaction is GTP + H2O = GDP + phosphate + H(+). In terms of biological role, g protein of the Ras family that positively regulates phagocytosis and negatively regulates macropinocytosis. May be involved in the activation of guanylyl cyclase during the response to hyperosmotic conditions. Overexpressing cells generate alterations in cell shape and contractile responses. Involved in chemotaxis via regulation of the balance of Ras and Rap signaling at the leading edge of chemotaxing cells. This chain is Ras-related protein rapA (rapA), found in Dictyostelium discoideum (Social amoeba).